Here is a 54-residue protein sequence, read N- to C-terminus: Snake venom 5'-nucleotidase (54 aa).

Zn(2+)-binding residues include Asp-11 and His-13. Asn-46 carries an N-linked (GlcNAc...) asparagine glycan.

Belongs to the 5'-nucleotidase family. Requires Zn(2+) as cofactor. Venom 5'-nucleotidases (or a part thereof) may be released into the venom via exosome-like vesicles. They may be attached via a GPI anchor to the membrane of these vesicles. Soluble forms of 5'-nucleotidase might be released by cleavage of the ectodomain in the exosome-like vesicles or venom gland cells. In terms of tissue distribution, expressed by the venom gland.

It localises to the membrane. It carries out the reaction a ribonucleoside 5'-phosphate + H2O = a ribonucleoside + phosphate. Hydrolyzes nucleotides into nucleosides. Snake venom 5'-nucleotidases are widely distributed among venomous snake taxa, but there is a lack of information about their biological activities. They have been shown to inhibit platelet aggregation. This effect may be due to the liberation of inhibitory AMP or adenosine by its action on ADP released upon initiation of aggregation. Venom 5'-nucleotidases are also known to synergistically act in vivo with other toxins like ADPases, phospholipases, and disintegrins to exert a more pronounced anti-coagulant effect. The sequence is that of Snake venom 5'-nucleotidase from Gloydius blomhoffii blomhoffii (Japanese mamushi).